The primary structure comprises 261 residues: Endonuclease NucS (261 aa).

It belongs to the NucS endonuclease family.

Its subcellular location is the cytoplasm. In terms of biological role, cleaves both 3' and 5' ssDNA extremities of branched DNA structures. The polypeptide is Endonuclease NucS (Aeropyrum pernix (strain ATCC 700893 / DSM 11879 / JCM 9820 / NBRC 100138 / K1)).